The following is a 463-amino-acid chain: Glycine--tRNA ligase (463 aa).

Arginine 102 serves as a coordination point for substrate. Residues 113–134 form a disordered region; sequence KHGHPPPNGLADIRDPDTGEPG. Glutamate 165 contacts substrate. ATP contacts are provided by residues 197-199, 207-212, 284-285, and 328-331; these read RNE, FRTREF, EL, and GLTR. 212–216 is a binding site for substrate; the sequence is FEQME. 324–328 contacts substrate; that stretch reads EPAAG.

This sequence belongs to the class-II aminoacyl-tRNA synthetase family. Homodimer.

It is found in the cytoplasm. It carries out the reaction tRNA(Gly) + glycine + ATP = glycyl-tRNA(Gly) + AMP + diphosphate. Catalyzes the attachment of glycine to tRNA(Gly). This is Glycine--tRNA ligase from Mycolicibacterium paratuberculosis (strain ATCC BAA-968 / K-10) (Mycobacterium paratuberculosis).